Reading from the N-terminus, the 610-residue chain is Menin (610 aa).

The tract at residues 214–390 is interaction with FANCD2; sequence GVAERSWLYL…SLLEAGEERP (177 aa). Residues 462–552 form a disordered region; that stretch reads AEAAEAEELW…SPPPEGPVLT (91 aa). Residues 484–500 are compositionally biased toward basic and acidic residues; sequence RRESKPEEPPPPKKPAL. Residues Ser-487 and Ser-543 each carry the phosphoserine modification. The span at 537-548 shows a compositional bias: pro residues; that stretch reads APAPAASPPPEG. Position 594 is a phosphothreonine (Thr-594).

Component of the MLL-HCF complex, at least composed of KMT2A/MLL1, MEN1, ASH2L, RBBP5, DPY30, WDR5, HCFC1 and HCFC2. Component of the menin-associated histone methyltransferase complex, at least composed of KMT2B/MLL4, MEN1, ASH2L, RBBP5, DPY30 and WDR5. Interacts with POLR2B. Interacts with POLR2A phosphorylated at 'Ser-5', but not with the unphosphorylated, nor 'Ser-2' phosphorylated POLR2A forms. Interacts with FANCD2 and DBF4. Interacts with SMAD3, but not with SMAD2, nor SMAD4. Directly interacts with NFKB1, NFKB2 and RELA. Interacts with JUND (via MBM motif); inhibits the interaction of JUND with MAPK10 and the phosphorylation of JUND by MAP kinases MAPK8 and MAPK10. Interacts with KMT2A (via MBM motif). The KMT2A-MEN1 complex interacts with PSIP1 with a greater affinity as MEN1 enhances interaction of KMT2A with PSIP1.

The protein resides in the nucleus. Essential component of a MLL/SET1 histone methyltransferase (HMT) complex, a complex that specifically methylates 'Lys-4' of histone H3 (H3K4). Functions as a transcriptional regulator. Binds to the TERT promoter and represses telomerase expression. Plays a role in TGFB1-mediated inhibition of cell-proliferation, possibly regulating SMAD3 transcriptional activity. Represses JUND-mediated transcriptional activation on AP1 sites, as well as that mediated by NFKB subunit RELA. Positively regulates HOXC8 and HOXC6 gene expression. May be involved in normal hematopoiesis through the activation of HOXA9 expression. May be involved in DNA repair. This chain is Menin (MEN1), found in Canis lupus familiaris (Dog).